The primary structure comprises 448 residues: Biotin carboxylase (448 aa).

In terms of domain architecture, Biotin carboxylation spans methionine 1–glycine 445. ATP contacts are provided by residues lysine 116, lysine 159, glycine 165–glycine 166, glutamate 201–leucine 204, histidine 209, and histidine 236. An ATP-grasp domain is found at isoleucine 120 to alanine 317. Residue lysine 238 participates in hydrogencarbonate binding. ATP contacts are provided by glutamate 276 and glutamate 288. The Mg(2+) site is built by glutamate 276, glutamate 288, and asparagine 290. 3 residues coordinate Mn(2+): glutamate 276, glutamate 288, and asparagine 290. Residues arginine 292, valine 295, and arginine 338 each coordinate hydrogencarbonate. The active site involves arginine 292. Arginine 338 provides a ligand contact to biotin.

In terms of assembly, acetyl-CoA carboxylase is a heterohexamer of biotin carboxyl carrier protein, biotin carboxylase and the two subunits of carboxyl transferase in a 2:2 complex. The cofactor is Mg(2+). It depends on Mn(2+) as a cofactor.

The catalysed reaction is N(6)-biotinyl-L-lysyl-[protein] + hydrogencarbonate + ATP = N(6)-carboxybiotinyl-L-lysyl-[protein] + ADP + phosphate + H(+). It participates in lipid metabolism; malonyl-CoA biosynthesis; malonyl-CoA from acetyl-CoA: step 1/1. In terms of biological role, this protein is a component of the acetyl coenzyme A carboxylase complex; first, biotin carboxylase catalyzes the carboxylation of the carrier protein and then the transcarboxylase transfers the carboxyl group to form malonyl-CoA. In Haemophilus influenzae (strain ATCC 51907 / DSM 11121 / KW20 / Rd), this protein is Biotin carboxylase (accC).